Reading from the N-terminus, the 146-residue chain is Hemoglobin subunit beta-1 (146 aa).

Residues 2 to 146 form the Globin domain; sequence KWTDKERAVI…VVSALGKQYC (145 aa). Residues His63 and His92 each coordinate heme b.

This sequence belongs to the globin family. Heterotetramer of two alpha chains and two beta chains. In terms of tissue distribution, red blood cells.

Its function is as follows. Involved in oxygen transport from gills to the various peripheral tissues. The sequence is that of Hemoglobin subunit beta-1 from Lycodes reticulatus (Arctic eelpout).